Here is a 217-residue protein sequence, read N- to C-terminus: MLDESLEPGWLSEEVKTGTTIIAIEFDGGVVLGSDSRVSAGETVVNRVMNKLSLLHDKIYCALSGSAADAQTIAEMVNYQLDVHSIEVGEDPQVRSAATLVKNISYKYKEDLSAHLIVAGWDKRGGGQVYVTLNGLLSRQPFAVGGSGSSYVYGFVDAEYRKAMSKEDCQQFVVNTLSLAMSRDGSSGGVAYLVTIDEKGAEEKCILGNELPTFYDQ.

Residues 1–18 (MLDESLEPGWLSEEVKTG) constitute a propeptide, removed in mature form. Catalysis depends on Thr-19, which acts as the Nucleophile.

This sequence belongs to the peptidase T1B family. The 26S proteasome consists of a 20S proteasome core and two 19S regulatory subunits. The 20S proteasome core is composed of 28 subunits that are arranged in four stacked rings, resulting in a barrel-shaped structure. The two end rings are each formed by seven alpha subunits, and the two central rings are each formed by seven beta subunits. The catalytic chamber with the active sites is on the inside of the barrel. Component of the immunoproteasome, where it displaces the equivalent housekeeping subunit PSMB6. Autocleaved. The resulting N-terminal Thr residue of the mature subunit is responsible for the nucleophile proteolytic activity.

The protein localises to the cytoplasm. The protein resides in the nucleus. The enzyme catalyses Cleavage of peptide bonds with very broad specificity.. In terms of biological role, the proteasome is a multicatalytic proteinase complex which is characterized by its ability to cleave peptides with Arg, Phe, Tyr, Leu, and Glu adjacent to the leaving group at neutral or slightly basic pH. The proteasome has an ATP-dependent proteolytic activity. This subunit is involved in antigen processing to generate class I binding peptides. The chain is Proteasome subunit beta type-9 (psmb9) from Oncorhynchus mykiss (Rainbow trout).